The sequence spans 327 residues: MRVIDSHTAGEPTRLVVEGGPDLGPGSLIEKAACLEAEHMDFCASVVLEPRGHDAIIGALLLPPSQPDCAAAVIYFNNLQNLGMCGHATIGLAVTLAHMGRIDPGRHKFETPVGIVEVDLQDANTVSVVNVESYRLHKDVTVEVPGHGKVTGDVAWGGNWFFLVKESPFDLTLENVPALTAYTKTIRQALENAGVTGTDCAWIDHIELFGPPKDPFAQSRNFVLCPGGAYDRSPCGTGCSAKLACLAEDGVLAPGEDWIQESVIGSTYRISYQPGTTKGVIPTITGQAFVTSDAHLIFNPADPYRFGIRPQNWTTSWITRTLSVEHG.

The Proton acceptor role is filled by C85. Substrate is bound by residues 86–87, H205, and D231; that span reads GH. C235 functions as the Proton donor in the catalytic mechanism. Position 236-237 (236-237) interacts with substrate; that stretch reads GT.

The protein belongs to the proline racemase family.

The catalysed reaction is trans-4-hydroxy-L-proline = cis-4-hydroxy-D-proline. Functionally, catalyzes the epimerization of trans-4-hydroxy-L-proline (t4LHyp) to cis-4-hydroxy-D-proline (c4DHyp). Displays no proline racemase activity. This chain is 4-hydroxyproline 2-epimerase, found in Roseibium alexandrii (strain DSM 17067 / NCIMB 14079 / DFL-11) (Labrenzia alexandrii).